We begin with the raw amino-acid sequence, 368 residues long: Probable dual-specificity RNA methyltransferase RlmN (368 aa).

Glu100 (proton acceptor) is an active-site residue. The region spanning 106-344 (QHYGLSVCVT…CVVRQEHGTD (239 aa)) is the Radical SAM core domain. Cysteines 113 and 349 form a disulfide. Positions 120, 124, and 127 each coordinate [4Fe-4S] cluster. Residues 172 to 173 (GE), Ser204, 227 to 229 (SLH), and Asn305 contribute to the S-adenosyl-L-methionine site. The S-methylcysteine intermediate role is filled by Cys349.

It belongs to the radical SAM superfamily. RlmN family. [4Fe-4S] cluster serves as cofactor.

The protein resides in the cytoplasm. The enzyme catalyses adenosine(2503) in 23S rRNA + 2 reduced [2Fe-2S]-[ferredoxin] + 2 S-adenosyl-L-methionine = 2-methyladenosine(2503) in 23S rRNA + 5'-deoxyadenosine + L-methionine + 2 oxidized [2Fe-2S]-[ferredoxin] + S-adenosyl-L-homocysteine. It carries out the reaction adenosine(37) in tRNA + 2 reduced [2Fe-2S]-[ferredoxin] + 2 S-adenosyl-L-methionine = 2-methyladenosine(37) in tRNA + 5'-deoxyadenosine + L-methionine + 2 oxidized [2Fe-2S]-[ferredoxin] + S-adenosyl-L-homocysteine. Specifically methylates position 2 of adenine 2503 in 23S rRNA and position 2 of adenine 37 in tRNAs. The sequence is that of Probable dual-specificity RNA methyltransferase RlmN from Streptococcus agalactiae serotype V (strain ATCC BAA-611 / 2603 V/R).